The chain runs to 482 residues: Aspartyl/glutamyl-tRNA(Asn/Gln) amidotransferase subunit B (482 aa).

This sequence belongs to the GatB/GatE family. GatB subfamily. As to quaternary structure, heterotrimer of A, B and C subunits.

It carries out the reaction L-glutamyl-tRNA(Gln) + L-glutamine + ATP + H2O = L-glutaminyl-tRNA(Gln) + L-glutamate + ADP + phosphate + H(+). The enzyme catalyses L-aspartyl-tRNA(Asn) + L-glutamine + ATP + H2O = L-asparaginyl-tRNA(Asn) + L-glutamate + ADP + phosphate + 2 H(+). Functionally, allows the formation of correctly charged Asn-tRNA(Asn) or Gln-tRNA(Gln) through the transamidation of misacylated Asp-tRNA(Asn) or Glu-tRNA(Gln) in organisms which lack either or both of asparaginyl-tRNA or glutaminyl-tRNA synthetases. The reaction takes place in the presence of glutamine and ATP through an activated phospho-Asp-tRNA(Asn) or phospho-Glu-tRNA(Gln). The protein is Aspartyl/glutamyl-tRNA(Asn/Gln) amidotransferase subunit B of Azotobacter vinelandii (strain DJ / ATCC BAA-1303).